A 188-amino-acid polypeptide reads, in one-letter code: NADH-quinone oxidoreductase subunit I 2 (188 aa).

2 consecutive 4Fe-4S ferredoxin-type domains span residues 56–88 (HFLK…VVPY) and 98–127 (AKFE…LGQQ). Positions 68, 71, 74, 78, 107, 110, 113, and 117 each coordinate [4Fe-4S] cluster.

It belongs to the complex I 23 kDa subunit family. As to quaternary structure, NDH-1 is composed of 14 different subunits. Subunits NuoA, H, J, K, L, M, N constitute the membrane sector of the complex. Requires [4Fe-4S] cluster as cofactor.

It is found in the cell inner membrane. It catalyses the reaction a quinone + NADH + 5 H(+)(in) = a quinol + NAD(+) + 4 H(+)(out). In terms of biological role, NDH-1 shuttles electrons from NADH, via FMN and iron-sulfur (Fe-S) centers, to quinones in the respiratory chain. The immediate electron acceptor for the enzyme in this species is believed to be ubiquinone. Couples the redox reaction to proton translocation (for every two electrons transferred, four hydrogen ions are translocated across the cytoplasmic membrane), and thus conserves the redox energy in a proton gradient. In Rhizobium etli (strain ATCC 51251 / DSM 11541 / JCM 21823 / NBRC 15573 / CFN 42), this protein is NADH-quinone oxidoreductase subunit I 2.